The following is a 265-amino-acid chain: Gap junction beta-4 protein (265 aa).

An intramembrane segment occupies Asn2–Val13. Over Asn14–Leu20 the chain is Cytoplasmic. Residues Gly21 to Ala40 traverse the membrane as a helical segment. Residues Glu41 to His73 lie on the Extracellular side of the membrane. Cystine bridges form between Cys53-Cys175, Cys60-Cys169, and Cys64-Cys164. A helical transmembrane segment spans residues Val74 to His94. The Cytoplasmic segment spans residues Val95–Thr130. A helical transmembrane segment spans residues Tyr131–Cys151. Residues Ile152 to Lys184 are Extracellular-facing. A helical membrane pass occupies residues Val185–Val205. At Ala206–Pro265 the chain is on the cytoplasmic side.

This sequence belongs to the connexin family. Beta-type (group I) subfamily. As to quaternary structure, a hemichannel or connexon is composed of a hexamer of connexins. A functional gap junction is formed by the apposition of two hemichannels. Forms heteromeric channels with GJB2. Detected in adult heart, kidney, skin and cochlea, where it is detected in spiral ganglion, stria vascularis, spiral limbus and spiral ligament (at protein level).

It localises to the cell membrane. The protein resides in the cell junction. Its subcellular location is the gap junction. Structural component of gap junctions. Gap junctions are dodecameric channels that connect the cytoplasm of adjoining cells. They are formed by the docking of two hexameric hemichannels, one from each cell membrane. Small molecules and ions diffuse from one cell to a neighboring cell via the central pore. This is Gap junction beta-4 protein (Gjb4) from Rattus norvegicus (Rat).